The following is a 275-amino-acid chain: Calcyphosin (275 aa).

Residues 59-87 (PGTTQLTQGPAGRTLGQTQASCPEPRPSM) are disordered. EF-hand domains lie at 107-142 (SGIQGLARFFRQLDRDGSRSLDADEFRQGLAKLGLV), 143-178 (LDQAEAEGVCRKWDRNGSGTLDLEEFLRALRPPMSQ), 179-214 (AREAVIAAAFAKLDRSGDGVVTVDDLRGVYSGRAHP), and 222-258 (TEDEVLRRFLDNFDSSEKDGQVTLAEFQDYYSGVSAS). Residues Asp120, Asp122, Ser124, Ser126, Glu131, Asp156, Asn158, Ser160, Thr162, Glu167, Asp192, Ser194, Asp196, and Asp203 each contribute to the Ca(2+) site. Ser126 bears the Phosphoserine; by PKA mark.

As to quaternary structure, monomer. Does not form oligomers in the presence of calcium.

Its subcellular location is the cytoplasm. In terms of biological role, calcium-binding protein. May play a role in cellular signaling events (Potential). This chain is Calcyphosin, found in Homo sapiens (Human).